The sequence spans 239 residues: Type III effector protein HopBA1 (239 aa).

Over residues 1-20 (MLNRISSSSPTSYVSSGSSS) the composition is skewed to low complexity. Residues 1–31 (MLNRISSSSPTSYVSSGSSSAGINPSINVRP) are disordered.

The protein resides in the secreted. Its subcellular location is the host cell. Virulence factor recognized by the A.thaliana disease resistance protein RBA1, which triggers plant cell death. HopBA1 enhances RBA1 self-association, which is necessary for ectopic autoactivation of host cell death. This is Type III effector protein HopBA1 from Pseudomonas syringae pv. aptata.